The chain runs to 363 residues: Phosphoserine aminotransferase (363 aa).

L-glutamate-binding residues include Ser-9 and Arg-42. Pyridoxal 5'-phosphate is bound by residues 76 to 77 (AR), Trp-102, Thr-154, Asp-174, and Gln-197. An N6-(pyridoxal phosphate)lysine modification is found at Lys-198. 240–241 (NT) contributes to the pyridoxal 5'-phosphate binding site.

Belongs to the class-V pyridoxal-phosphate-dependent aminotransferase family. SerC subfamily. Homodimer. Pyridoxal 5'-phosphate is required as a cofactor.

The protein resides in the cytoplasm. The enzyme catalyses O-phospho-L-serine + 2-oxoglutarate = 3-phosphooxypyruvate + L-glutamate. The catalysed reaction is 4-(phosphooxy)-L-threonine + 2-oxoglutarate = (R)-3-hydroxy-2-oxo-4-phosphooxybutanoate + L-glutamate. It functions in the pathway amino-acid biosynthesis; L-serine biosynthesis; L-serine from 3-phospho-D-glycerate: step 2/3. It participates in cofactor biosynthesis; pyridoxine 5'-phosphate biosynthesis; pyridoxine 5'-phosphate from D-erythrose 4-phosphate: step 3/5. Its function is as follows. Catalyzes the reversible conversion of 3-phosphohydroxypyruvate to phosphoserine and of 3-hydroxy-2-oxo-4-phosphonooxybutanoate to phosphohydroxythreonine. The polypeptide is Phosphoserine aminotransferase (Baumannia cicadellinicola subsp. Homalodisca coagulata).